The primary structure comprises 198 residues: Recombination protein RecR (198 aa).

The C4-type zinc finger occupies 57 to 72; that stretch reads CSECGHITEQDPCYIC. Residues 80–175 enclose the Toprim domain; sequence SVICVVEDDK…TVTRLAQGLS (96 aa).

This sequence belongs to the RecR family.

In terms of biological role, may play a role in DNA repair. It seems to be involved in an RecBC-independent recombinational process of DNA repair. It may act with RecF and RecO. The polypeptide is Recombination protein RecR (Staphylococcus saprophyticus subsp. saprophyticus (strain ATCC 15305 / DSM 20229 / NCIMB 8711 / NCTC 7292 / S-41)).